A 113-amino-acid polypeptide reads, in one-letter code: uncharacterized protein (113 aa).

The next 3 helical transmembrane spans lie at 9 to 31 (IFPSLPIIVFIVFVEVPVLSVIY), 36 to 58 (VLTIYPLLISLIFSLAVFAYKFQ), and 71 to 90 (IMALFVIFWLLSQITMVVAV).

It is found in the cell membrane. This is an uncharacterized protein from Archaeoglobus fulgidus (strain ATCC 49558 / DSM 4304 / JCM 9628 / NBRC 100126 / VC-16).